The primary structure comprises 542 residues: Peptide chain release factor 3 (542 aa).

Positions 14-283 (ERRRNFAIIS…AFLDYALKPA (270 aa)) constitute a tr-type G domain. GTP contacts are provided by residues 23 to 30 (SHPDAGKT), 91 to 95 (DTPGH), and 145 to 148 (NKLD).

The protein belongs to the TRAFAC class translation factor GTPase superfamily. Classic translation factor GTPase family. PrfC subfamily.

It localises to the cytoplasm. Functionally, increases the formation of ribosomal termination complexes and stimulates activities of RF-1 and RF-2. It binds guanine nucleotides and has strong preference for UGA stop codons. It may interact directly with the ribosome. The stimulation of RF-1 and RF-2 is significantly reduced by GTP and GDP, but not by GMP. The sequence is that of Peptide chain release factor 3 from Cyanothece sp. (strain PCC 7425 / ATCC 29141).